The following is an 820-amino-acid chain: Mediator of RNA polymerase II transcription subunit 16 (820 aa).

WD repeat units lie at residues S74–K114, R621–S665, and S757–C811.

The protein belongs to the Mediator complex subunit 16 family. As to quaternary structure, component of the Mediator complex.

Its subcellular location is the nucleus. Functionally, component of the Mediator complex, a coactivator involved in the regulated transcription of nearly all RNA polymerase II-dependent genes. Mediator functions as a bridge to convey information from gene-specific regulatory proteins to the basal RNA polymerase II transcription machinery. Mediator is recruited to promoters by direct interactions with regulatory proteins and serves as a scaffold for the assembly of a functional preinitiation complex with RNA polymerase II and the general transcription factors. The protein is Mediator of RNA polymerase II transcription subunit 16 (MED16) of Aedes aegypti (Yellowfever mosquito).